The sequence spans 246 residues: Proteasome subunit alpha type-6-A (246 aa).

Belongs to the peptidase T1A family. Component of the 20S core complex of the 26S proteasome. The 26S proteasome is composed of a core protease (CP), known as the 20S proteasome, capped at one or both ends by the 19S regulatory particle (RP/PA700). The 20S proteasome core is composed of 28 subunits that are arranged in four stacked rings, resulting in a barrel-shaped structure. The two end rings are each formed by seven alpha subunits, and the two central rings are each formed by seven beta subunits. The catalytic chamber with the active sites is on the inside of the barrel. Ubiquitous low levels, higher expression in siliques and flowers.

Its subcellular location is the cytoplasm. The protein localises to the nucleus. Functionally, the proteasome is a multicatalytic proteinase complex which is characterized by its ability to cleave peptides with Arg, Phe, Tyr, Leu, and Glu adjacent to the leaving group at neutral or slightly basic pH. The proteasome has an ATP-dependent proteolytic activity. The sequence is that of Proteasome subunit alpha type-6-A (PAA1) from Arabidopsis thaliana (Mouse-ear cress).